The following is a 2347-amino-acid chain: Proto-oncogene tyrosine-protein kinase ROS (2347 aa).

An N-terminal signal peptide occupies residues 1-27 (MKNIYCLIPKLVNFATLGCLWISVVQC). Residues 28-1859 (TVLNSCLKSC…LVGDDFWIPE (1832 aa)) lie on the Extracellular side of the membrane. Residues N52, N114, and N123 are each glycosylated (N-linked (GlcNAc...) asparagine). Fibronectin type-III domains lie at 101 to 196 (LPTA…VPET) and 197 to 285 (APLI…SSSA). N-linked (GlcNAc...) asparagine glycosylation is found at N324, N352, N396, N471, N607, N628, N706, N714, N732, N939, N961, N1015, N1087, N1090, N1095, N1211, N1272, N1330, N1458, N1461, N1474, N1499, N1565, N1669, N1715, N1738, and N1808. The Fibronectin type-III 3 domain maps to 557–671 (LPGRPQELSV…EPSVGTTLVP (115 aa)). 2 Fibronectin type-III domains span residues 947–1042 (IPDS…TVPS) and 1043–1150 (APEN…TSEI). Fibronectin type-III domains lie at 1450–1556 (DTVE…TKNG), 1557–1656 (VPEA…VEMF), 1658–1751 (TPEK…TKAG), and 1752–1854 (VPNK…VGDD). A helical transmembrane segment spans residues 1860-1882 (TSFILTIIVGIFLVVTIPLTFVW). The Cytoplasmic segment spans residues 1883 to 2347 (HRRLKNQKSA…THSGYGDGSD (465 aa)). One can recognise a Protein kinase domain in the interval 1945–2222 (LTLRLLLGSG…DQLQLFRNFF (278 aa)). ATP-binding positions include 1951-1959 (LGSGAFGEV) and K1980. The Proton acceptor role is filled by D2079. Y2274 carries the post-translational modification Phosphotyrosine; by autocatalysis. The segment at 2284-2311 (GEEKSEGPLGSQESESCGLRKEEKEPHA) is disordered. Residues 2301 to 2311 (GLRKEEKEPHA) are compositionally biased toward basic and acidic residues. At Y2334 the chain carries Phosphotyrosine; by autocatalysis.

It belongs to the protein kinase superfamily. Tyr protein kinase family. Insulin receptor subfamily. In terms of assembly, interacts with PTPN6 (via SH2 1 domain); the interaction is direct and promotes ROS1 dephosphorylation. Interacts with PTPN11; may activate the PI3 kinase-mTOR signaling pathway. Interacts with VAV3; constitutive interaction mediating VAV3 phosphorylation. Phosphorylated. Probably autophosphorylates. Phosphorylation at Tyr-2274 is required for the interaction with PTPN6 that mediates ROS1 dephosphorylation. Phosphorylation at Tyr-2274 stimulates the kinase activity and the activation of the ERK1 signaling cascade. Phosphorylation at Tyr-2274 and/or Tyr-2334 recruits PTPN11. Expressed in brain. Expression is increased in primary gliomas.

It is found in the cell membrane. It carries out the reaction L-tyrosyl-[protein] + ATP = O-phospho-L-tyrosyl-[protein] + ADP + H(+). Inhibited by dephosphorylation by PTPN6. Receptor tyrosine kinase (RTK) that plays a role in epithelial cell differentiation and regionalization of the proximal epididymal epithelium. NELL2 is an endogenous ligand for ROS1. Upon endogenous stimulation by NELL2, ROS1 activates the intracellular signaling pathway and triggers epididymal epithelial differentiation and subsequent sperm maturation. May activate several downstream signaling pathways related to cell differentiation, proliferation, growth and survival including the PI3 kinase-mTOR signaling pathway. Mediates the phosphorylation of PTPN11, an activator of this pathway. May also phosphorylate and activate the transcription factor STAT3 to control anchorage-independent cell growth. Mediates the phosphorylation and the activation of VAV3, a guanine nucleotide exchange factor regulating cell morphology. May activate other downstream signaling proteins including AKT1, MAPK1, MAPK3, IRS1 and PLCG2. This chain is Proto-oncogene tyrosine-protein kinase ROS (ROS1), found in Homo sapiens (Human).